The chain runs to 161 residues: Nucleotide-binding protein XOO0647 (161 aa).

It belongs to the YajQ family.

Its function is as follows. Nucleotide-binding protein. This is Nucleotide-binding protein XOO0647 from Xanthomonas oryzae pv. oryzae (strain MAFF 311018).